Here is a 660-residue protein sequence, read N- to C-terminus: Methionine--tRNA ligase (660 aa).

The 'HIGH' region signature appears at 15-25 (YYPSDKLHIGH). The 'KMSKS' region motif lies at 311–315 (KMSKS). Residue K314 participates in ATP binding. The segment at 535 to 554 (LMGGSKKPEEAPKDEKEESD) is disordered. Residues 540–550 (KKPEEAPKDEK) are compositionally biased toward basic and acidic residues. In terms of domain architecture, tRNA-binding spans 560 to 660 (DFSKVELRIA…GALPNGSLVK (101 aa)).

Belongs to the class-I aminoacyl-tRNA synthetase family. MetG type 2B subfamily. Homodimer.

The protein resides in the cytoplasm. It carries out the reaction tRNA(Met) + L-methionine + ATP = L-methionyl-tRNA(Met) + AMP + diphosphate. In terms of biological role, is required not only for elongation of protein synthesis but also for the initiation of all mRNA translation through initiator tRNA(fMet) aminoacylation. In Halalkalibacterium halodurans (strain ATCC BAA-125 / DSM 18197 / FERM 7344 / JCM 9153 / C-125) (Bacillus halodurans), this protein is Methionine--tRNA ligase (metG).